A 51-amino-acid polypeptide reads, in one-letter code: uncharacterized protein (51 aa).

This is an uncharacterized protein from Bacillus subtilis (strain 168).